We begin with the raw amino-acid sequence, 931 residues long: Protein translocase subunit SecA (931 aa).

Residues Gln-87, 105–109 (GEGKT), and Asp-515 contribute to the ATP site. Zn(2+) contacts are provided by Cys-915, Cys-917, Cys-926, and His-927.

The protein belongs to the SecA family. As to quaternary structure, monomer and homodimer. Part of the essential Sec protein translocation apparatus which comprises SecA, SecYEG and auxiliary proteins SecDF-YajC and YidC. Requires Zn(2+) as cofactor.

It is found in the cell inner membrane. The protein localises to the cytoplasm. The catalysed reaction is ATP + H2O + cellular proteinSide 1 = ADP + phosphate + cellular proteinSide 2.. Part of the Sec protein translocase complex. Interacts with the SecYEG preprotein conducting channel. Has a central role in coupling the hydrolysis of ATP to the transfer of proteins into and across the cell membrane, serving both as a receptor for the preprotein-SecB complex and as an ATP-driven molecular motor driving the stepwise translocation of polypeptide chains across the membrane. The polypeptide is Protein translocase subunit SecA (Burkholderia pseudomallei (strain K96243)).